A 368-amino-acid chain; its full sequence is 3-dehydroquinate synthase (368 aa).

NAD(+) contacts are provided by residues 112-116 (GVVGD), 136-137 (TT), Lys149, Lys158, and 176-179 (FLDT). Zn(2+) contacts are provided by Glu191, His257, and His274.

The protein belongs to the sugar phosphate cyclases superfamily. Dehydroquinate synthase family. Co(2+) is required as a cofactor. It depends on Zn(2+) as a cofactor. Requires NAD(+) as cofactor.

The protein localises to the cytoplasm. It carries out the reaction 7-phospho-2-dehydro-3-deoxy-D-arabino-heptonate = 3-dehydroquinate + phosphate. Its pathway is metabolic intermediate biosynthesis; chorismate biosynthesis; chorismate from D-erythrose 4-phosphate and phosphoenolpyruvate: step 2/7. Its function is as follows. Catalyzes the conversion of 3-deoxy-D-arabino-heptulosonate 7-phosphate (DAHP) to dehydroquinate (DHQ). This is 3-dehydroquinate synthase from Natranaerobius thermophilus (strain ATCC BAA-1301 / DSM 18059 / JW/NM-WN-LF).